The primary structure comprises 746 residues: Protein zyg-11 homolog (746 aa).

LRR repeat units lie at residues 185 to 209, 216 to 241, and 265 to 289; these read LPRLESLDISNTSVSNLTPLLGLRS, MHQLKRLEMTTAQLLAVLSQLEVLQH, and LPQLVSLDVSGRKQVTDAAVKAFVE.

This sequence belongs to the zyg-11 family.

Functionally, serves as substrate adapter subunit in an E3 ubiquitin ligase complex zyg11-cul2-elongin BC. Targets substrates bearing N-terminal glycine degrons for proteasomal degradation. This chain is Protein zyg-11 homolog (zyg11), found in Danio rerio (Zebrafish).